The following is a 681-amino-acid chain: DNA ligase (681 aa).

Residues 35-39, 84-85, and glutamate 115 contribute to the NAD(+) site; these read DAEYD and SL. The active-site N6-AMP-lysine intermediate is the lysine 117. NAD(+) is bound by residues arginine 138, glutamate 175, lysine 293, and lysine 317. Cysteine 411, cysteine 414, cysteine 429, and cysteine 435 together coordinate Zn(2+). The 84-residue stretch at 598 to 681 folds into the BRCT domain; the sequence is RTNLAVPGKT…SLLRDTSSSE (84 aa).

This sequence belongs to the NAD-dependent DNA ligase family. LigA subfamily. Mg(2+) is required as a cofactor. Mn(2+) serves as cofactor.

It carries out the reaction NAD(+) + (deoxyribonucleotide)n-3'-hydroxyl + 5'-phospho-(deoxyribonucleotide)m = (deoxyribonucleotide)n+m + AMP + beta-nicotinamide D-nucleotide.. DNA ligase that catalyzes the formation of phosphodiester linkages between 5'-phosphoryl and 3'-hydroxyl groups in double-stranded DNA using NAD as a coenzyme and as the energy source for the reaction. It is essential for DNA replication and repair of damaged DNA. This chain is DNA ligase, found in Nitrosomonas europaea (strain ATCC 19718 / CIP 103999 / KCTC 2705 / NBRC 14298).